The chain runs to 523 residues: Polypyrimidine tract-binding protein 3 (523 aa).

The disordered stretch occupies residues 1 to 25; it reads MNNSTSAGVYANGNDNKKFKGDRPP. RRM domains are found at residues 30–114, 153–229, and 329–403; these read RVLH…NLPN, LRII…FSKL, and SVLL…LSKH. Lys-36 is covalently cross-linked (Glycyl lysine isopeptide (Lys-Gly) (interchain with G-Cter in SUMO2)). Position 98 is a phosphotyrosine (Tyr-98). Thr-109 is modified (phosphothreonine). Residue Lys-187 forms a Glycyl lysine isopeptide (Lys-Gly) (interchain with G-Cter in SUMO2) linkage. Residue Lys-394 is modified to N6-acetyllysine. The interval 406–426 is disordered; it reads VQLPREGQEDQGLTKDFSNSP. Ser-425 carries the phosphoserine modification. Residues 446–521 enclose the RRM 4 domain; that stretch reads ATLHLSNIPP…HHLRVSFSKS (76 aa).

Interacts with THBS4 (via the acidic amphipathic C-terminus). In terms of tissue distribution, detected specifically in spleen, thymus, lungs, and bone marrow.

RNA-binding protein that mediates pre-mRNA alternative splicing regulation. Plays a role in the regulation of cell proliferation, differentiation and migration. Positive regulator of EPO-dependent erythropoiesis. Participates in cell differentiation regulation by repressing tissue-specific exons. Promotes Fas exon 6 skipping. Binds RNA, preferentially to both poly(G) and poly(U). The polypeptide is Polypyrimidine tract-binding protein 3 (Ptbp3) (Rattus norvegicus (Rat)).